Reading from the N-terminus, the 325-residue chain is RepFIB replication protein A (325 aa).

A disordered region spans residues 279-298 (APNDESKENPLPPSPAEKVS).

This sequence belongs to the initiator RepB protein family.

Its function is as follows. This protein is essential for plasmid replication; it is involved in copy control functions. In vitro, binds to the DNA repeat units, BCDD'D'', EFG and HIJ. This is RepFIB replication protein A (repB) from Escherichia coli (strain K12).